Reading from the N-terminus, the 116-residue chain is Nucleoid-associated protein P9515_00191 (116 aa).

Basic and acidic residues predominate over residues 89–98 (STTTMKERMN). The disordered stretch occupies residues 89–116 (STTTMKERMNDLTGGLNLNLPGLDNNDS). Over residues 99 to 116 (DLTGGLNLNLPGLDNNDS) the composition is skewed to low complexity.

Belongs to the YbaB/EbfC family. Homodimer.

The protein resides in the cytoplasm. It localises to the nucleoid. In terms of biological role, binds to DNA and alters its conformation. May be involved in regulation of gene expression, nucleoid organization and DNA protection. This chain is Nucleoid-associated protein P9515_00191, found in Prochlorococcus marinus (strain MIT 9515).